A 32-amino-acid polypeptide reads, in one-letter code: Photosystem II reaction center protein T (32 aa).

At Met1 the chain carries N-formylmethionine. Over 1 to 2 (ME) the chain is Lumenal. The chain crosses the membrane as a helical span at residues 3 to 23 (TITYVFIFACIIALFFFAIFF). The Cytoplasmic portion of the chain corresponds to 24–32 (REPPRITKK).

This sequence belongs to the PsbT family. As to quaternary structure, PSII is composed of 1 copy each of membrane proteins PsbA, PsbB, PsbC, PsbD, PsbE, PsbF, PsbH, PsbI, PsbJ, PsbK, PsbL, PsbM, PsbT, PsbX, PsbY, PsbZ, Psb30/Ycf12, PsbO, CyanoQ (PsbQ), PsbU, PsbV and a large number of cofactors. It forms dimeric complexes. Part of a photosystem II (PSII) assembly intermediate complex PSII-I; crystallized from a strain deleted of psbJ, it forms monomeric PSII before addition of the oxygen evolving complex. PSII-I includes 3 assembly factors not found in mature PSII (Psb27, Psb28 and Psb34). PSII binds multiple chlorophylls, carotenoids and specific lipids. is required as a cofactor.

It is found in the cellular thylakoid membrane. Found at the monomer-monomer interface of the photosystem II (PS II) dimer, plays a role in assembly and dimerization of PSII. PSII is a light-driven water plastoquinone oxidoreductase, using light energy to abstract electrons from H(2)O, generating a proton gradient subsequently used for ATP formation. The chain is Photosystem II reaction center protein T from Thermosynechococcus vestitus (strain NIES-2133 / IAM M-273 / BP-1).